A 378-amino-acid polypeptide reads, in one-letter code: B3 domain-containing protein Os03g0622200 (378 aa).

The segment at residues 29–124 (SKHFLKHMVG…SFDVLIFDPS (96 aa)) is a DNA-binding region (TF-B3 1). The disordered stretch occupies residues 140-159 (GRAENSAGAEQGGRNGRRTP). Positions 256-370 (FVQVIHSSHV…TMTVHVLRRV (115 aa)) form a DNA-binding region, TF-B3 2.

It is found in the nucleus. The chain is B3 domain-containing protein Os03g0622200 from Oryza sativa subsp. japonica (Rice).